The primary structure comprises 144 residues: Large ribosomal subunit protein uL15 (144 aa).

The segment at methionine 1–glycine 53 is disordered. Over residues arginine 21–glycine 31 the composition is skewed to gly residues.

The protein belongs to the universal ribosomal protein uL15 family. In terms of assembly, part of the 50S ribosomal subunit.

Binds to the 23S rRNA. This chain is Large ribosomal subunit protein uL15, found in Pectobacterium atrosepticum (strain SCRI 1043 / ATCC BAA-672) (Erwinia carotovora subsp. atroseptica).